A 1060-amino-acid polypeptide reads, in one-letter code: RNA-binding protein 27 (1060 aa).

Disordered stretches follow at residues 80-143 (PLEP…DGKW), 160-278 (YDWR…PKRR), and 319-416 (PPPG…PPPL). 2 stretches are compositionally biased toward basic and acidic residues: residues 84 to 102 (VKPE…KEEV) and 124 to 143 (SRSE…DGKW). The segment covering 165–185 (GRSKSRSKSRGLSRSRSRSRG) has biased composition (basic residues). Basic and acidic residues predominate over residues 186–211 (RSKDRDPNRNVEHRERSKFKSERNDL). 2 stretches are compositionally biased toward low complexity: residues 225-235 (SSEQYSSGAQS) and 255-268 (SWSN…SSNS). The segment at 273–301 (PPPKRRCRDYDERGFCVLGDLCQFDHGND) adopts a C3H1-type zinc-finger fold. Composition is skewed to pro residues over residues 319 to 356 (PPPG…PGPG) and 371 to 384 (QPPP…PRPP). Residues 387–402 (QSSLINSRDQPGTSAV) show a composition bias toward polar residues. Phosphothreonine is present on Thr-447. Arg-455 is subject to Omega-N-methylarginine. The segment at 572-594 (LTKKPWLGKQGNNNQSKPGFLRK) is disordered. An RRM domain is found at 600-674 (TKLEVKKIPQ…RFIRVLWHRE (75 aa)). Residues 754 to 775 (HASTNQSDTSHLLNQTGGSSGE) form a disordered region. Residues 755–770 (ASTNQSDTSHLLNQTG) are compositionally biased toward polar residues. A coiled-coil region spans residues 810–887 (VQEVLKKKQE…KDELKTSSTV (78 aa)). At Ser-928 the chain carries Phosphoserine. The segment at 943 to 982 (GRGKTISSQGRGRGRGRGRGRGSLNHMVVDHRPKALPGGG) is disordered. Phosphoserine occurs at positions 1012 and 1020. The interval 1014–1060 (HKPKVPSISTETEEEEVKEEETETSDLFLHDDDDEDEDEYESRSWRR) is disordered. Acidic residues-rich tracts occupy residues 1024–1037 (ETEE…ETET) and 1044–1053 (DDDDEDEDEY).

It is found in the cytoplasm. Its subcellular location is the nucleus speckle. Functionally, may be involved in the turnover of nuclear polyadenylated (pA+) RNA. This chain is RNA-binding protein 27, found in Mus musculus (Mouse).